The chain runs to 511 residues: IWS1-like protein (511 aa).

Residues 1–200 (MSDHEEESHG…DDGPVDRHGR (200 aa)) are disordered. Composition is skewed to low complexity over residues 11–30 (ASPTSPASSGASSPLAPISP) and 55–86 (APASPARDSSAPASPSAASPAGSRSPSPSPVK). Positions 94-103 (DSDEDSDAEE) are enriched in acidic residues. Residues 134–143 (HEGTSKKEPT) are compositionally biased toward basic and acidic residues. Over residues 166–179 (LDEFVEGRDEEESQ) the composition is skewed to acidic residues. The 81-residue stretch at 294–374 (SALSEWLAPL…GEWARPIYHL (81 aa)) folds into the TFIIS N-terminal domain. The segment at 382–454 (SRQEREERDY…RARVPKPSTK (73 aa)) is disordered. Basic and acidic residues-rich tracts occupy residues 383-395 (RQEREERDYSRMP) and 414-425 (DQPKRPRIRDAD).

This sequence belongs to the IWS1 family.

The protein resides in the nucleus. In Caenorhabditis elegans, this protein is IWS1-like protein.